An 873-amino-acid polypeptide reads, in one-letter code: Disks large homolog 1 (873 aa).

One can recognise an L27 domain in the interval 4 to 64 (RQKDAQRALQ…YYEVSLQDTE (61 aa)). Residues 62-135 (DTEDKPIEDS…SPHIPGDARP (74 aa)) are disordered. The segment covering 63–77 (TEDKPIEDSSLKSRE) has biased composition (basic and acidic residues). A compositionally biased stretch (polar residues) spans 85 to 96 (WNLSVPPSTTGP). 2 PDZ domains span residues 230-317 (EITL…RRRK) and 325-412 (DVKL…AKPT). Positions 441–456 (SYLSQPLTPATPSRYS) are enriched in polar residues. A disordered region spans residues 441-464 (SYLSQPLTPATPSRYSPVSKGMLG). A PDZ 3 domain is found at 474–555 (KIVLHRGTTG…TVTIIAQYRP (82 aa)). Positions 636 to 662 (NKDSGEQDTSDVDQHVTSNASDSESSF) are disordered. The span at 650-662 (HVTSNASDSESSF) shows a compositional bias: polar residues. The Guanylate kinase-like domain occupies 683 to 858 (SRPVIILGPM…IYNQVKQIIE (176 aa)).

This sequence belongs to the MAGUK family.

The protein resides in the cell membrane. It is found in the endoplasmic reticulum membrane. It localises to the cell junction. The protein localises to the apical cell membrane. In terms of biological role, essential multidomain scaffolding protein required for normal development. Recruits channels, receptors and signaling molecules to discrete plasma membrane domains in polarized cells. Promotes epithelial cell layer barrier function via maintaining cell-cell adhesion. May play a role in adherens junction assembly, signal transduction and cell proliferation. May play a role in synapse assembly and function. In Danio rerio (Zebrafish), this protein is Disks large homolog 1 (dlg1).